The chain runs to 306 residues: tRNA dimethylallyltransferase 1 (306 aa).

15-22 is a binding site for ATP; sequence GPTGSGKS. 17–22 contacts substrate; sequence TGSGKS. Positions 40–43 are interaction with substrate tRNA; the sequence is DSMQ.

It belongs to the IPP transferase family. In terms of assembly, monomer. Mg(2+) serves as cofactor.

It catalyses the reaction adenosine(37) in tRNA + dimethylallyl diphosphate = N(6)-dimethylallyladenosine(37) in tRNA + diphosphate. In terms of biological role, catalyzes the transfer of a dimethylallyl group onto the adenine at position 37 in tRNAs that read codons beginning with uridine, leading to the formation of N6-(dimethylallyl)adenosine (i(6)A). The chain is tRNA dimethylallyltransferase 1 from Citrifermentans bemidjiense (strain ATCC BAA-1014 / DSM 16622 / JCM 12645 / Bem) (Geobacter bemidjiensis).